The sequence spans 1066 residues: Protein sts5 (1066 aa).

Over residues 18–28 the composition is skewed to low complexity; the sequence is QQDPSDAQSSP. Disordered stretches follow at residues 18–40, 154–178, and 247–286; these read QQDPSDAQSSPTFVPSANPSLTT, ATSTNISPRRHAKSHSVASVSSPNS, and SNFRPEGGGHRHRRSTGSLSVGSSGSGFSSGGSGNPRKNL. Positions 29-40 are enriched in polar residues; that stretch reads TFVPSANPSLTT. T157 bears the Phosphothreonine mark. Over residues 168–178 the composition is skewed to low complexity; sequence HSVASVSSPNS. T262 is subject to Phosphothreonine. S264 is modified (phosphoserine). The span at 270 to 280 shows a compositional bias: gly residues; it reads SGSGFSSGGSG. T377 is subject to Phosphothreonine. A disordered region spans residues 454-480; it reads SSAANKERQTSSGNQGSSNNSGNDKPK. Residues 464–476 are compositionally biased toward low complexity; that stretch reads SSGNQGSSNNSGN. Residues 482 to 556 enclose the CSD2 domain; it reads VWFKPSDKRV…AQVSALLHDT (75 aa). In terms of domain architecture, RNB spans 618-934; it reads NINSSSATDF…VHYQLQLLLR (317 aa). Positions 983-1033 constitute a DIS3L2 C-terminal domain; the sequence is QDGLVCFVAPSYFDVFFPSLGMEKRVHLDLLNLTHVRFEEDQGILSLYDES.

The protein belongs to the RNR ribonuclease family. In terms of assembly, interacts with serine/threonine phosphatase ppe1, protein kinase C and an osmosensing MAP kinase.

Its subcellular location is the cytoplasm. Functionally, required for the maintenance of cell shape during interphase. Required for localization of cortical actin to the growing tips before mitosis. The polypeptide is Protein sts5 (sts5) (Schizosaccharomyces pombe (strain 972 / ATCC 24843) (Fission yeast)).